We begin with the raw amino-acid sequence, 121 residues long: Colipase-like protein 1 (121 aa).

Positions 1–23 are cleaved as a signal peptide; the sequence is MMLPQWLLLLFLLFFFLFLLTRG. 5 cysteine pairs are disulfide-bonded: C39–C50, C45–C61, C49–C83, C71–C91, and C85–C107.

The protein belongs to the colipase family. As to expression, exclusively expressed in epididymis, in the corpus region.

Its subcellular location is the secreted. The sequence is that of Colipase-like protein 1 (CLPSL1) from Homo sapiens (Human).